The primary structure comprises 941 residues: Replicative DNA helicase DnaB (941 aa).

The segment at 1-25 is disordered; sequence MAEFEERPRLSIGEEEAPPYPLEKL. The region spanning 214 to 484 is the SF4 helicase; first part domain; sequence RPGGITGVPS…PVYRLTTRLG (271 aa). 245-252 lines the ATP pocket; sequence ARPSMGKT. The region spanning 534-683 is the DOD-type homing endonuclease domain; it reads LLGHLIGDGC…VQSLLLRLGI (150 aa). Residues 646-915 enclose the SF4 helicase; second part domain; the sequence is DGCIQMRRGK…ARFENLTMYQ (270 aa). Residues 914–941 form a disordered region; sequence YQPEPGTPLPETPDETILPSGPPDEAPF.

The protein belongs to the helicase family. DnaB subfamily. As to quaternary structure, homohexamer. Post-translationally, upon expression in E.coli this protein undergoes self splicing that involves a post-translational excision of the intervening region (intein) followed by peptide ligation.

It catalyses the reaction Couples ATP hydrolysis with the unwinding of duplex DNA at the replication fork by translocating in the 5'-3' direction. This creates two antiparallel DNA single strands (ssDNA). The leading ssDNA polymer is the template for DNA polymerase III holoenzyme which synthesizes a continuous strand.. It carries out the reaction ATP + H2O = ADP + phosphate + H(+). The main replicative DNA helicase, it participates in initiation and elongation during chromosome replication. Travels ahead of the DNA replisome, separating dsDNA into templates for DNA synthesis. A processive ATP-dependent 5'-3' DNA helicase it has DNA-dependent ATPase activity. Functionally, the intein is an endonuclease. The sequence is that of Replicative DNA helicase DnaB from Rhodothermus marinus (Rhodothermus obamensis).